The primary structure comprises 634 residues: 1-deoxy-D-xylulose-5-phosphate synthase (634 aa).

Residues His-74 and 115–117 (AHS) each bind thiamine diphosphate. Residue Asp-146 participates in Mg(2+) binding. Thiamine diphosphate contacts are provided by residues 147–148 (GA), Asn-176, Tyr-283, and Glu-365. Asn-176 lines the Mg(2+) pocket.

It belongs to the transketolase family. DXPS subfamily. As to quaternary structure, homodimer. The cofactor is Mg(2+). Thiamine diphosphate serves as cofactor.

The enzyme catalyses D-glyceraldehyde 3-phosphate + pyruvate + H(+) = 1-deoxy-D-xylulose 5-phosphate + CO2. It functions in the pathway metabolic intermediate biosynthesis; 1-deoxy-D-xylulose 5-phosphate biosynthesis; 1-deoxy-D-xylulose 5-phosphate from D-glyceraldehyde 3-phosphate and pyruvate: step 1/1. Functionally, catalyzes the acyloin condensation reaction between C atoms 2 and 3 of pyruvate and glyceraldehyde 3-phosphate to yield 1-deoxy-D-xylulose-5-phosphate (DXP). The chain is 1-deoxy-D-xylulose-5-phosphate synthase from Burkholderia ambifaria (strain MC40-6).